Reading from the N-terminus, the 790-residue chain is Nitrogen permease reactivator protein (790 aa).

Positions 1–68 are disordered; sequence MSSLTRLLQE…DRNRANVPVP (68 aa). The segment covering 16-38 has biased composition (polar residues); that stretch reads TSNSSPRTSADTLTTTPESQSLD. A compositionally biased stretch (low complexity) spans 46–58; the sequence is SSHIGSVSNSSSS. The residue at position 47 (Ser-47) is a Phosphoserine; by autocatalysis. Ser-85, Ser-90, Ser-100, Ser-111, Ser-116, Ser-125, Ser-137, and Ser-141 each carry phosphoserine. Residues 151–175 show a composition bias toward polar residues; it reads RLSTTSHTSGRAIPSLSSSIPYSVP. Disordered regions lie at residues 151 to 188 and 234 to 258; these read RLST…NSNS and LQKA…SGSF. The segment covering 176–188 has biased composition (low complexity); it reads NSNKDNNSSNSNS. Residues 238-248 show a composition bias toward polar residues; it reads SMDSNNANATQ. Positions 249–258 are enriched in low complexity; sequence SRSISRSGSF. Position 257 is a phosphoserine; by autocatalysis (Ser-257). Ser-259, Ser-260, Ser-288, Ser-292, Ser-317, Ser-320, and Ser-328 each carry phosphoserine. Residues 276 to 289 are compositionally biased toward low complexity; that stretch reads NSNSAGMSFSANSN. The tract at residues 276–357 is disordered; it reads NSNSAGMSFS…QSVPRSQHSS (82 aa). 3 stretches are compositionally biased toward polar residues: residues 290 to 305, 314 to 339, and 346 to 357; these read GPSP…NGST, RQSS…SPSS, and PSQSVPRSQHSS. Tyr-334 carries the phosphotyrosine modification. Ser-336, Ser-353, and Ser-356 each carry phosphoserine. At Ser-357 the chain carries Phosphoserine; by autocatalysis. Position 385 is a phosphoserine (Ser-385). One can recognise a Protein kinase domain in the interval 438–742; sequence IKTGADLGAG…IEEIMEDPWI (305 aa). Residues 444–452 and Lys-467 contribute to the ATP site; that span reads LGAGAGGSV. Asp-561 (proton acceptor) is an active-site residue. Disordered stretches follow at residues 666-704 and 766-790; these read LVTR…NIGP and HHTQ…QNNQ. Basic and acidic residues predominate over residues 677-688; sequence DESHSTEKKKPE. Residues 689-701 are compositionally biased toward low complexity; the sequence is SSSNNVSDPNNVN.

This sequence belongs to the protein kinase superfamily. Ser/Thr protein kinase family. Interacts with TIP41. In terms of processing, hyperphosphorylated in nitrogen-rich growth medium. Nitrogen limitation (or rapamycin treatment) leads to substantial, though not complete dephosphorylation. Autophosphorylation plays only a minor role and seems not to be regulated by the quality of the nitrogen source.

The protein resides in the cytoplasm. The catalysed reaction is L-seryl-[protein] + ATP = O-phospho-L-seryl-[protein] + ADP + H(+). It catalyses the reaction L-threonyl-[protein] + ATP = O-phospho-L-threonyl-[protein] + ADP + H(+). With respect to regulation, dephosphorylation by SIT4 activates NPR1 kinase activity. Its function is as follows. Nutrient-regulated protein kinase that promotes the activity of at least 6 distinct transport systems for nitrogenous nutrients under conditions of nitrogen catabolite derepression. Under poor nitrogen growth conditions, required for post-Golgi sorting of the general amino acid permease GAP1 and the three known ammonia permeases, MEP1/2/3, to the plasma membrane. Also contributes to the stability and the retention of GAP1 at the plasma membrane. Inversely, promotes the degradation of tryptophan permease TAT2 under the same conditions. Activity is regulated by the TOR signaling pathway via phosphatase SIT4. Although thought to be involved in regulation of GLN3-dependent transcription by nitrogen catabolite repression, this seems to be an indirect effect from the reduced uptake of the nitrogen-repressing compound. The chain is Nitrogen permease reactivator protein (NPR1) from Saccharomyces cerevisiae (strain ATCC 204508 / S288c) (Baker's yeast).